Here is a 293-residue protein sequence, read N- to C-terminus: Probable chromosome 2-partitioning protein ParB (293 aa).

It belongs to the ParB family.

In terms of biological role, involved in chromosome partition. Localize to both poles of the predivisional cell following completion of DNA replication. Binds to the DNA origin of replication. This is Probable chromosome 2-partitioning protein ParB (parB2) from Deinococcus radiodurans (strain ATCC 13939 / DSM 20539 / JCM 16871 / CCUG 27074 / LMG 4051 / NBRC 15346 / NCIMB 9279 / VKM B-1422 / R1).